The primary structure comprises 382 residues: Glutamyl-tRNA reductase (382 aa).

Substrate-binding positions include 38 to 41 (TCNR), Ser85, 90 to 92 (ENQ), and Gln96. The active-site Nucleophile is the Cys39. Position 164–169 (164–169 (GAGEMG)) interacts with NADP(+).

It belongs to the glutamyl-tRNA reductase family. In terms of assembly, homodimer.

The enzyme catalyses (S)-4-amino-5-oxopentanoate + tRNA(Glu) + NADP(+) = L-glutamyl-tRNA(Glu) + NADPH + H(+). The protein operates within porphyrin-containing compound metabolism; protoporphyrin-IX biosynthesis; 5-aminolevulinate from L-glutamyl-tRNA(Glu): step 1/2. In terms of biological role, catalyzes the NADPH-dependent reduction of glutamyl-tRNA(Glu) to glutamate 1-semialdehyde (GSA). In Methanococcus maripaludis (strain C6 / ATCC BAA-1332), this protein is Glutamyl-tRNA reductase.